Reading from the N-terminus, the 359-residue chain is Oplophorus-luciferin 2-monooxygenase non-catalytic subunit (359 aa).

A signal peptide spans Met-1 to Asn-39. LRR repeat units lie at residues Ala-135–Gln-158, Thr-160–Ser-180, Asp-181–Thr-203, Ser-228–Leu-251, Gly-255–Gly-278, Gln-280–Pro-300, Leu-302–Ile-325, and Leu-331–Ala-356.

Heterotetramer of a catalytic 19 kDa and a non-catalytic 35 kDa subunit.

It localises to the secreted. Non-catalytic subunit of oplophorus-luciferin 2-monooxygenase. May stabilize the active conformation of the catalytic subunit. In Oplophorus gracilirostris (Luminous shrimp), this protein is Oplophorus-luciferin 2-monooxygenase non-catalytic subunit.